Consider the following 216-residue polypeptide: Ras-related protein RABE1a (216 aa).

22 to 29 (GDSGVGKS) provides a ligand contact to GTP. The Effector region motif lies at 44 to 52 (FITTIGIDF). GTP contacts are provided by residues 70-74 (DTAGQ), 128-131 (NKAD), and 159-160 (SA). The segment at 185–216 (DARAEPQTIKINQSDQGAGTSQATQKSACCGT) is disordered. Polar residues predominate over residues 193–216 (IKINQSDQGAGTSQATQKSACCGT). S-geranylgeranyl cysteine attachment occurs at residues C213 and C214.

This sequence belongs to the small GTPase superfamily. Rab family. Interacts with PI5K2.

The protein resides in the golgi apparatus membrane. It localises to the cell membrane. Involved in membrane trafficking from the Golgi to the plasma membrane. The polypeptide is Ras-related protein RABE1a (RABE1A) (Arabidopsis thaliana (Mouse-ear cress)).